The primary structure comprises 346 residues: DnaJ protein ERDJ3B (346 aa).

The first 23 residues, 1 to 23 (MAIRWSELCIVLFALSYAICVLA), serve as a signal peptide directing secretion. Residues 26–91 (SYYDVLQVPK…EKREIYNKYG (66 aa)) enclose the J domain. N267 carries an N-linked (GlcNAc...) asparagine glycan.

As to quaternary structure, interacts with SDF2 and MED37A/BIP1. N-glycosylated. In terms of tissue distribution, expressed in leaves, flower buds and flowers.

The protein resides in the endoplasmic reticulum lumen. Its function is as follows. Regulates protein folding in the endoplasmic reticulum (ER) lumen. Forms a complex in the ER with SDF2 and MED37A/BIP1 which is required for the proper accumulation and function of the surface-exposed leucine-rich repeat receptor kinases EFR involved in pathogen-associated molecular pattern (PAMP) triggered immunity. In Arabidopsis thaliana (Mouse-ear cress), this protein is DnaJ protein ERDJ3B (ERDJ3B).